Reading from the N-terminus, the 132-residue chain is Agouti-signaling protein (132 aa).

A signal peptide spans 1-22; sequence MDVTRLLLATLLVFLCFFTVYS. Asparagine 39 carries an N-linked (GlcNAc...) asparagine glycan. A disordered region spans residues 61–87; sequence HISRKEAEKKRSSKKEASMKKVARPRT. Positions 64-79 are enriched in basic and acidic residues; the sequence is RKEAEKKRSSKKEASM. 5 disulfides stabilise this stretch: cysteine 93/cysteine 108, cysteine 100/cysteine 114, cysteine 107/cysteine 125, cysteine 111/cysteine 132, and cysteine 116/cysteine 123. In terms of domain architecture, Agouti spans 93 to 132; sequence CVATRDSCKPPAPACCDPCASCQCRFFRSACSCRVLSLNC.

It localises to the secreted. Functionally, involved in the regulation of melanogenesis. The binding of ASP to MC1R precludes alpha-MSH initiated signaling and thus blocks production of cAMP, leading to a down-regulation of eumelanogenesis (brown/black pigment) and thus increasing synthesis of pheomelanin (yellow/red pigment). The polypeptide is Agouti-signaling protein (ASIP) (Colobus polykomos (Western black-and-white colobus monkey)).